Consider the following 409-residue polypeptide: Broad specificity amino-acid racemase (409 aa).

The N-terminal stretch at 1-25 (MRLKKTLLSIAIAAATFTPAMHSIA) is a signal peptide. A disulfide bridge connects residues Cys-72 and Cys-98. Catalysis depends on Lys-76, which acts as the Proton acceptor. The residue at position 76 (Lys-76) is an N6-(pyridoxal phosphate)lysine. Arg-175 serves as a coordination point for substrate. The active-site Proton acceptor is the Tyr-301. Met-349 contacts substrate.

Belongs to the alanine racemase family. Bsr subfamily. The cofactor is pyridoxal 5'-phosphate.

Its subcellular location is the periplasm. The catalysed reaction is an L-alpha-amino acid = a D-alpha-amino acid. The enzyme catalyses L-lysine = D-lysine. It carries out the reaction L-arginine = D-arginine. In terms of biological role, amino-acid racemase able to utilize a broad range of substrates. In Vibrio parahaemolyticus serotype O3:K6 (strain RIMD 2210633), this protein is Broad specificity amino-acid racemase.